The chain runs to 443 residues: Trigger factor (443 aa).

In terms of domain architecture, PPIase FKBP-type spans G163–P248.

It belongs to the FKBP-type PPIase family. Tig subfamily.

It is found in the cytoplasm. The catalysed reaction is [protein]-peptidylproline (omega=180) = [protein]-peptidylproline (omega=0). Functionally, involved in protein export. Acts as a chaperone by maintaining the newly synthesized protein in an open conformation. Functions as a peptidyl-prolyl cis-trans isomerase. The sequence is that of Trigger factor from Agathobacter rectalis (strain ATCC 33656 / DSM 3377 / JCM 17463 / KCTC 5835 / VPI 0990) (Eubacterium rectale).